A 125-amino-acid chain; its full sequence is Cytochrome c oxidase assembly factor 6 homolog (125 aa).

N-acetylalanine is present on Gly2. The region spanning 55–98 is the CHCH domain; the sequence is RQVCWGARDEYWKCLDENLEDASQCKKLRSSFESSCPQQWIKYF. Residues 58 to 68 carry the Cx9C motif motif; it reads CWGARDEYWKC. Cystine bridges form between Cys58/Cys90 and Cys68/Cys79. Positions 79 to 90 match the Cx10C motif motif; sequence CKKLRSSFESSC.

Belongs to the cytochrome c oxidase subunit 6B family. Interacts with COA1. Found in a complex with TMEM177, COX20, MT-CO2/COX2, COX18, SCO1 and SCO2. Interacts with MT-CO2/COX2 and SCO2. Interacts with SCO1. Interacts with COX20 in a MT-CO2/COX2- and COX18-dependent manner. Interacts with COX16.

It localises to the mitochondrion intermembrane space. In terms of biological role, involved in the maturation of the mitochondrial respiratory chain complex IV subunit MT-CO2/COX2. Thereby, may regulate early steps of complex IV assembly. Mitochondrial respiratory chain complex IV or cytochrome c oxidase is the component of the respiratory chain that catalyzes the transfer of electrons from intermembrane space cytochrome c to molecular oxygen in the matrix and as a consequence contributes to the proton gradient involved in mitochondrial ATP synthesis. May also be required for efficient formation of respiratory supercomplexes comprised of complexes III and IV. In Homo sapiens (Human), this protein is Cytochrome c oxidase assembly factor 6 homolog (COA6).